A 916-amino-acid chain; its full sequence is Oxoglutarate dehydrogenase (916 aa).

This sequence belongs to the alpha-ketoglutarate dehydrogenase family. In terms of assembly, homodimer. Part of the 2-oxoglutarate dehydrogenase (OGDH) complex composed of E1 (2-oxoglutarate dehydrogenase), E2 (dihydrolipoamide succinyltransferase) and E3 (dihydrolipoamide dehydrogenase); the complex contains multiple copies of the three enzymatic components (E1, E2 and E3). The cofactor is thiamine diphosphate.

It catalyses the reaction N(6)-[(R)-lipoyl]-L-lysyl-[protein] + 2-oxoglutarate + H(+) = N(6)-[(R)-S(8)-succinyldihydrolipoyl]-L-lysyl-[protein] + CO2. E1 component of the 2-oxoglutarate dehydrogenase (OGDH) complex which catalyzes the decarboxylation of 2-oxoglutarate, the first step in the conversion of 2-oxoglutarate to succinyl-CoA and CO(2). The polypeptide is Oxoglutarate dehydrogenase (sucA) (Buchnera aphidicola subsp. Baizongia pistaciae (strain Bp)).